The following is a 430-amino-acid chain: UDP-N-acetylglucosamine 1-carboxyvinyltransferase (430 aa).

Residue lysine 22–asparagine 23 coordinates phosphoenolpyruvate. Arginine 102 lines the UDP-N-acetyl-alpha-D-glucosamine pocket. Cysteine 126 serves as the catalytic Proton donor. The residue at position 126 (cysteine 126) is a 2-(S-cysteinyl)pyruvic acid O-phosphothioketal. Residues arginine 131–leucine 135, lysine 172–valine 175, aspartate 317, and isoleucine 339 contribute to the UDP-N-acetyl-alpha-D-glucosamine site.

The protein belongs to the EPSP synthase family. MurA subfamily.

Its subcellular location is the cytoplasm. The catalysed reaction is phosphoenolpyruvate + UDP-N-acetyl-alpha-D-glucosamine = UDP-N-acetyl-3-O-(1-carboxyvinyl)-alpha-D-glucosamine + phosphate. It functions in the pathway cell wall biogenesis; peptidoglycan biosynthesis. Cell wall formation. Adds enolpyruvyl to UDP-N-acetylglucosamine. The protein is UDP-N-acetylglucosamine 1-carboxyvinyltransferase of Allorhizobium ampelinum (strain ATCC BAA-846 / DSM 112012 / S4) (Agrobacterium vitis (strain S4)).